Reading from the N-terminus, the 155-residue chain is Glutaredoxin-related protein 5, mitochondrial (155 aa).

A mitochondrion-targeting transit peptide spans 1–14 (MNSVFRSTARCLRS). The region spanning 42 to 145 (QKNLEEMVKK…EELQKLGIRS (104 aa)) is the Glutaredoxin domain. Glutathione is bound at residue Lys-59. [2Fe-2S] cluster is bound at residue Cys-67. Glutathione contacts are provided by residues 97–101 (RQGIK), Ile-109, and 122–123 (CD).

In terms of assembly, homodimer.

It localises to the mitochondrion. In terms of biological role, monothiol glutaredoxin involved in mitochondrial iron-sulfur (Fe/S) cluster transfer. Receives iron-sulfur clusters from scaffold protein ISCU and mediates their transfer to apoproteins, to the 4Fe/FS cluster biosynthesis machinery, or export from mitochondrion. Required for normal hemoglobin biosynthesis. This Danio rerio (Zebrafish) protein is Glutaredoxin-related protein 5, mitochondrial (glrx5).